A 432-amino-acid polypeptide reads, in one-letter code: Glycosyltransferase 6 (432 aa).

The Cytoplasmic segment spans residues 1–18 (MGKPGGAKTRTAVCLSDG). Residues 19–39 (VFFLAGAFMSLTLVWSYFSIF) form a helical; Signal-anchor for type II membrane protein membrane-spanning segment. Residues 40-432 (SPSFTSLRHD…LPFDYPNEAW (393 aa)) are Lumenal-facing. N-linked (GlcNAc...) asparagine glycosylation occurs at Asn315.

Belongs to the glycosyltransferase 34 family.

Its subcellular location is the golgi apparatus membrane. Probable glycosyltransferase that may be involved in the biosynthesis of xyloglucan. This is Glycosyltransferase 6 (GT6) from Arabidopsis thaliana (Mouse-ear cress).